The chain runs to 214 residues: Vascular endothelial growth factor A (214 aa).

An N-terminal signal peptide occupies residues 1–26 (MNFLLSWVHWTLALLLYLHHAKWSQA). Cystine bridges form between Cys-51/Cys-93, Cys-82/Cys-127, and Cys-86/Cys-129. Asn-100 carries N-linked (GlcNAc...) asparagine glycosylation. Positions 131-142 (PKKDRTKPEKKS) are enriched in basic and acidic residues. A disordered region spans residues 131–159 (PKKDRTKPEKKSVRGKGKGQKRKRKKSRF). Residues 143–159 (VRGKGKGQKRKRKKSRF) show a composition bias toward basic residues.

The protein belongs to the PDGF/VEGF growth factor family. In terms of assembly, homodimer; disulfide-linked. Also found as heterodimer with PGF. Interacts with NRP1. Interacts with isoform 2 of BSG. Interacts with CD82; this interaction inhibits VEGFA-mediated signaling pathway. Expressed in the pituitary, in brain, in particularly in supraoptic and paraventricular nuclei and the choroid plexus. Also found abundantly in the corpus luteum of the ovary and in kidney glomeruli. Expressed in the ductal epithelial cells of post-pubertal mammary glands. Expressed in the ductal and alveolar epithelial cells throughout the whole period of gestational evolution, lactation and involution.

Its subcellular location is the secreted. In terms of biological role, growth factor active in angiogenesis, vasculogenesis and endothelial cell growth. Induces endothelial cell proliferation, promotes cell migration, inhibits apoptosis and induces permeabilization of blood vessels. Binds to the FLT1/VEGFR1 and KDR/VEGFR2 receptors, heparan sulfate and heparin. May play a role in increasing vascular permeability during lactation, when increased transport of molecules from the blood is required for efficient milk protein synthesis. Binding to NRP1 receptor initiates a signaling pathway needed for motor neuron axon guidance and cell body migration, including for the caudal migration of facial motor neurons from rhombomere 4 to rhombomere 6 during embryonic development. Also binds the DEAR/FBXW7-AS1 receptor. The polypeptide is Vascular endothelial growth factor A (Vegfa) (Rattus norvegicus (Rat)).